The sequence spans 456 residues: Zinc finger protein 25 (456 aa).

In terms of domain architecture, KRAB spans 8 to 79; that stretch reads VTLKDVIVEF…EVEFPHRGFP (72 aa). 12 C2H2-type zinc fingers span residues 118–140, 146–168, 174–196, 202–224, 230–252, 258–280, 286–308, 314–336, 342–364, 370–392, 398–420, and 426–448; these read CECK…QHTH, YDCD…QKIH, YECK…LRTH, YECN…QKTH, FECT…QKTH, YECK…QRMH, YKCK…QRSH, YECK…QRTH, FECN…QRKH, YECT…QRTH, YACK…QRKH, and YECQ…QKTH.

It belongs to the krueppel C2H2-type zinc-finger protein family.

The protein localises to the nucleus. May be involved in transcriptional regulation. This chain is Zinc finger protein 25 (ZNF25), found in Homo sapiens (Human).